Here is a 292-residue protein sequence, read N- to C-terminus: Tetratricopeptide repeat protein 1 (292 aa).

2 stretches are compositionally biased toward basic and acidic residues: residues 1 to 12 (MEEKSEDCKVPE) and 47 to 64 (KAAEAHPQDDHVEEECFH). The segment at 1 to 125 (MEEKSEDCKV…SAKLKEEGNE (125 aa)) is disordered. Positions 88–98 (SSSELDEEYLI) are enriched in acidic residues. Phosphoserine is present on serine 90. Basic and acidic residues predominate over residues 99–125 (ELEKNMPEEEKQKRREESAKLKEEGNE). TPR repeat units lie at residues 116 to 149 (SAKLKEEGNERFKRGDYMEAESSYSQALQMCPAC), 155 to 188 (SVLFSNRAAARMKQDKKETAITDCSKAIQLNPTY), and 189 to 222 (IRAILRRAELYEKTDKLDEALEDYKSVLEKDPSV).

As to quaternary structure, interacts with the GAP domain of NF1. Interacts (via TPR repeats) with HSP90AA1 and HSPA8.

The sequence is that of Tetratricopeptide repeat protein 1 (Ttc1) from Mus musculus (Mouse).